Reading from the N-terminus, the 462-residue chain is A-type ATP synthase subunit B (462 aa).

This sequence belongs to the ATPase alpha/beta chains family. Has multiple subunits with at least A(3), B(3), C, D, E, F, H, I and proteolipid K(x).

The protein resides in the cell membrane. In terms of biological role, component of the A-type ATP synthase that produces ATP from ADP in the presence of a proton gradient across the membrane. The B chain is a regulatory subunit. This is A-type ATP synthase subunit B from Methanococcus vannielii (strain ATCC 35089 / DSM 1224 / JCM 13029 / OCM 148 / SB).